The primary structure comprises 769 residues: Phenylalanine--tRNA ligase beta subunit (769 aa).

A tRNA-binding domain is found at 40 to 141; the sequence is GKLLTIARVA…GEPIPGCEPD (102 aa). The region spanning 389-467 is the B5 domain; the sequence is PAPPPIELPL…RMIGYDSIAP (79 aa). Mg(2+) is bound by residues aspartate 445, aspartate 451, glutamate 454, and glutamate 455. Residues 676–768 enclose the FDX-ACB domain; it reads RRYPSSAFDL…GMRAKGYELR (93 aa).

The protein belongs to the phenylalanyl-tRNA synthetase beta subunit family. Type 1 subfamily. In terms of assembly, tetramer of two alpha and two beta subunits. Mg(2+) is required as a cofactor.

Its subcellular location is the cytoplasm. It catalyses the reaction tRNA(Phe) + L-phenylalanine + ATP = L-phenylalanyl-tRNA(Phe) + AMP + diphosphate + H(+). In Solibacter usitatus (strain Ellin6076), this protein is Phenylalanine--tRNA ligase beta subunit.